Reading from the N-terminus, the 229-residue chain is Transmembrane protein 182 (229 aa).

The first 26 residues, 1–26 (MRLNVAVFFGALFGALGVLLFLVAFG), serve as a signal peptide directing secretion. Topologically, residues 27–114 (SDYWLLATEV…SYDSAIIYRG (88 aa)) are extracellular. An N-linked (GlcNAc...) asparagine glycan is attached at Asn-47. The segment at 49 to 59 (TFHHEGFFWRC) is interaction with ITGB1. Asn-68, Asn-85, and Asn-102 each carry an N-linked (GlcNAc...) asparagine glycan. A helical transmembrane segment spans residues 115 to 135 (FWAVLLLLGVVAALTASFLII). Residues 136-153 (CAAPFSSHFLYKAGGGSY) lie on the Cytoplasmic side of the membrane. The helical transmembrane segment at 154–174 (IASGVLFSLVVILYVIWVQAV) threads the bilayer. Over 175-200 (ADMESYRALRMRDCWEFTPSILYGWS) the chain is Extracellular. The helical transmembrane segment at 201–221 (FFLAPAGVFFSLLAGLLFLVV) threads the bilayer. Topologically, residues 222–229 (GRHIQIHH) are cytoplasmic.

It belongs to the TMEM182 family. In terms of assembly, interacts with ITGB1. Highly expressed in white adipose tissues (WAT), with 10-fold to 20-fold higher levels than in brown adipose tissue (BAT). Also expressed in skeletal muscle, heart and lung. Lower relative levels of expression in kidney, spleen, testis, brain and liver.

It is found in the cell membrane. In terms of biological role, negatively regulates myogenesis and skeletal muscle regeneration via its association with ITGB1. Modulates ITGB1 activation by decreasing ITGB1-LAMB1 interaction and inhibiting ITGB1-mediated intracellular signaling during myogenesis. In Mus musculus (Mouse), this protein is Transmembrane protein 182 (Tmem182).